An 819-amino-acid chain; its full sequence is Ribosome-releasing factor 2, mitochondrial (819 aa).

A mitochondrion-targeting transit peptide spans 1–30 (MWKWNVRRWAGARVNISKNRLSVINVGSRY). The 289-residue stretch at 39–327 (SKVRNIGIIA…AIVNYLPSPI (289 aa)) folds into the tr-type G domain. GTP-binding positions include 48-55 (AHIDAGKT), 113-117 (DTPGH), and 165-168 (NKMD).

It belongs to the TRAFAC class translation factor GTPase superfamily. Classic translation factor GTPase family. EF-G/EF-2 subfamily.

It is found in the mitochondrion. Its function is as follows. Mitochondrial GTPase that mediates the disassembly of ribosomes from messenger RNA at the termination of mitochondrial protein biosynthesis. Not involved in the GTP-dependent ribosomal translocation step during translation elongation. This Saccharomyces cerevisiae (strain RM11-1a) (Baker's yeast) protein is Ribosome-releasing factor 2, mitochondrial.